The sequence spans 267 residues: MVVVAAAPSAATAAPKVLLLSGQPASGGRALPLMVPGPRAAGSEASGTPQARKRQRLTHLSPEEKALRRKLKNRVAAQTARDRKKARMSELEQQVVDLEEENHKLQLENQLLREKTHGLVVENQELRTRLGMDTLDPDEVPEVEAKGSGVRLVAGSAESAALRLCAPLQQVQAQLSPPQNIFPWTLTLLPLQILSLISFWAFWTSWTLSCFSNVLPQSLLVWRNSQRSTQKDLVPYQPPFLCQWGPHQPSWKPLMNSFVLTMYTPSL.

At 1 to 180 (MVVVAAAPSA…VQAQLSPPQN (180 aa)) the chain is on the cytoplasmic side. Residues 35–56 (VPGPRAAGSEASGTPQARKRQR) form a disordered region. Phosphoserine is present on Ser-61. Positions 63–126 (EEKALRRKLK…HGLVVENQEL (64 aa)) constitute a bZIP domain. A basic motif region spans residues 65-87 (KALRRKLKNRVAAQTARDRKKAR). A nuclear localization signal (NLS) region spans residues 69 to 85 (RKLKNRVAAQTARDRKK). Residues 91–126 (LEQQVVDLEEENHKLQLENQLLREKTHGLVVENQEL) are leucine-zipper. Residues 181–198 (IFPWTLTLLPLQILSLIS) traverse the membrane as a helical; Signal-anchor for type II membrane protein segment. Topologically, residues 199–267 (FWAFWTSWTL…FVLTMYTPSL (69 aa)) are lumenal. Positions 230 to 256 (QKDLVPYQPPFLCQWGPHQPSWKPLMN) are necessary for the translational pausing of its own mRNA.

Belongs to the bZIP family. As to quaternary structure, isoform 1 interacts with HM13. Isoform 1 interacts with RNF139; the interaction induces ubiquitination and degradation of isoform 1. Isoform 1 interacts (via luminal domain) with DERL1; the interaction obviates the need for ectodomain shedding prior HM13/SPP-mediated XBP1 isoform 1 cleavage. Isoform 1 interacts with isoform 2; the interaction sequesters isoform 2 from the nucleus and enhances isoform 2 degradation in the cytoplasm. Isoform 1 interacts with HDAC3 and AKT1; the interactions occur in endothelial cell (EC) under disturbed flow. Isoform 1 interacts with the oncoprotein FOS. Isoform 2 interacts with ATF6; the interaction occurs in a ER stress-dependent manner and is required for DNA binding to the unfolded protein response element (UPRE). Isoform 2 interacts with PIK3R1; the interaction is direct and induces translocation of XBP1 isoform 2 into the nucleus and the unfolded protein response (UPR) XBP1-dependent target genes activation in a ER stress- and/or insulin-dependent but PI3K-independent manner. Isoform 2 interacts with SIRT1. Isoform 2 interacts with PIK3R1 and PIK3R2; the interactions are direct and induce translocation of XBP1 isoform 2 into the nucleus and the unfolded protein response (UPR) XBP1-dependent target genes activation in a ER stress- and/or insulin-dependent but PI3K-independent manner. Isoform 2 interacts with FOXO1; the interaction is direct and leads to FOXO1 ubiquitination and degradation via the proteasome pathway in hepatocytes. Post-translationally, acetylated by EP300; acetylation positively regulates the transcriptional activity of XBP1 isoform 2. Isoform 2 is deacetylated by SIRT1; deacetylation negatively regulates the transcriptional activity of XBP1 isoform 2. Ubiquitinated, leading to proteasomal degradation in response to ER stress. In terms of processing, X-box-binding protein 1, cytoplasmic form and luminal form are produced by intramembrane proteolytic cleavage of ER membrane-anchored isoform 1 triggered by HM13/SPP in a DERL1-RNF139-dependent and VCP/p97-independent manner. X-box-binding protein 1, luminal form is ubiquitinated leading to proteasomal degradation. In terms of tissue distribution, isoform 1 and isoform 2 are expressed at higher level in branch curves of vessel walls and in atherosclerotic plaques relative to healthy segments of the same aortas (at protein level). Expressed in skeletal muscles, plasma cells and pancreatic beta cells. Isoform 1 and isoform 2 are expressed in gonadal adipose tissue. Isoform 1 is expressed in inguinal adipose tissue.

It localises to the endoplasmic reticulum. The protein localises to the nucleus. It is found in the cytoplasm. Its subcellular location is the endoplasmic reticulum membrane. The protein resides in the membrane. Functions as a transcription factor during endoplasmic reticulum stress by regulating the unfolded protein response (UPR). Required for cardiac myogenesis and hepatogenesis during embryonic development and the development of secretory tissues such as exocrine pancreas and salivary gland. Involved in differentiation of B lymphocytes to plasma cells and production of immunoglobulins. Modulates the cellular response to ER stress in a PIK3R-dependent manner. Binds to the cis-acting X box present in the promoter regions of major histocompatibility complex class II genes. Involved in VEGF-induced endothelial cell (EC) proliferation and retinal blood vessel formation during embryonic development but also for angiogenesis in adult tissues under ischemic conditions. Also functions as a major regulator of the UPR in obesity-induced insulin resistance and type 2 diabetes for the management of obesity and diabetes prevention. Functionally, plays a role in the unconventional cytoplasmic splicing processing of its own mRNA triggered by the endoplasmic reticulum (ER) transmembrane endoribonuclease ERN1: upon ER stress, the emerging XBP1 polypeptide chain, as part of a mRNA-ribosome-nascent chain (R-RNC) complex, cotranslationally recruits its own unprocessed mRNA through transient docking to the ER membrane and translational pausing, therefore facilitating efficient IRE1-mediated XBP1 mRNA isoform 2 production. In endothelial cells (EC), associated with KDR, promotes IRE1-mediated XBP1 mRNA isoform 2 production in a vascular endothelial growth factor (VEGF)-dependent manner, leading to EC proliferation and angiogenesis. Functions as a negative feed-back regulator of the potent transcription factor XBP1 isoform 2 protein levels through proteasome-mediated degradation, thus preventing the constitutive activation of the ER stress response signaling pathway. Inhibits the transactivation activity of XBP1 isoform 2 in myeloma cells. Acts as a weak transcriptional factor. Together with HDAC3, contributes to the activation of NFE2L2-mediated HMOX1 transcription factor gene expression in a PI(3)K/mTORC2/Akt-dependent signaling pathway leading to EC survival under disturbed flow/oxidative stress. Binds to the ER stress response element (ERSE) upon ER stress. Binds to the consensus 5'-GATGACGTG[TG]N(3)[AT]T-3' sequence related to cAMP responsive element (CRE)-like sequences. Binds the Tax-responsive element (TRE) present in the long terminal repeat (LTR) of T-cell leukemia virus type 1 (HTLV-I) and to the TPA response elements (TRE). Associates preferentially to the HDAC3 gene promoter region in a static flow-dependent manner. Binds to the CDH5/VE-cadherin gene promoter region. In terms of biological role, functions as a stress-inducible potent transcriptional activator during endoplasmic reticulum (ER) stress by inducing unfolded protein response (UPR) target genes via binding to the UPR element (UPRE). Up-regulates target genes encoding ER chaperones and ER-associated degradation (ERAD) components to enhance the capacity of productive folding and degradation mechanism, respectively, in order to maintain the homeostasis of the ER under ER stress. Plays a role in the production of immunoglobulins and interleukin-6 in the presence of stimuli required for plasma cell differentiation, and promotes as well membrane phospholipid biosynthesis necessary for ER expansion. Contributes to the VEGF-induced endothelial cell (EC) growth and proliferation in a Akt/GSK-dependent and/or -independent signaling pathway, respectively, leading to beta-catenin nuclear translocation and E2F2 gene expression. Promotes umbilical vein EC apoptosis and atherosclerotisis development in a caspase-dependent signaling pathway, and contributes to VEGF-induced EC proliferation and angiogenesis in adult tissues under ischemic conditions. Involved in the regulation of endostatin-induced autophagy in EC through BECN1 transcriptional activation. Plays a role as an oncogene by promoting tumor progression: stimulates zinc finger protein SNAI1 transcription to induce epithelial-to-mesenchymal (EMT) transition, cell migration and invasion of breast cancer cells. Involved in adipocyte differentiation by regulating lipogenic gene expression during lactation. Plays a role in the survival of both dopaminergic neurons of the substantia nigra pars compacta (SNpc), by maintaining protein homeostasis and of myeloma cells. Increases insulin sensitivity in the liver as a response to a high carbohydrate diet, resulting in improved glucose tolerance. Also improves glucose homeostasis in an ER stress- and/or insulin-independent manner through both binding and proteasome-induced degradation of the transcription factor FOXO1, hence resulting in suppression of gluconeogenic genes expression and in a reduction of blood glucose levels. Controls the induction of de novo fatty acid synthesis in hepatocytes by regulating the expression of a subset of lipogenic genes in an ER stress- and UPR-independent manner. Binds to the 5'-CCACG-3' motif in the PPARG promoter. Associates preferentially to the HDAC3 gene promoter region in a disturbed flow-dependent manner. Binds to the BECN1 gene promoter region. Binds to the CDH5/VE-cadherin gene promoter region. Binds to the ER stress response element (ERSE) upon ER stress. The polypeptide is X-box-binding protein 1 (Mus musculus (Mouse)).